Reading from the N-terminus, the 542-residue chain is Protein phosphatase 1G (542 aa).

Residue Gly2 is the site of N-myristoyl glycine attachment. Residue Arg22 is modified to Omega-N-methylarginine. The PPM-type phosphatase domain maps to 26–502; it reads PYGFSAMQGW…DNMTCIIICF (477 aa). Positions 60 and 61 each coordinate Mn(2+). 2 disordered regions span residues 117–136 and 164–325; these read IAGR…DEDD and CQKV…SDSG. Thr122 is modified (phosphothreonine). Acidic residues-rich tracts occupy residues 123–136 and 259–309; these read EDED…DEDD and DSED…DEEM. Lys380 carries the post-translational modification N6-acetyllysine. The Mn(2+) site is built by Asp438 and Asp493. The segment at 513 to 542 is disordered; it reads ESGKRKLEEALSTEGAEDTGNSDKKKAKRD. A Phosphoserine modification is found at Ser524.

Belongs to the PP2C family. In terms of assembly, interacts with NOL3; may dephosphorylate NOL3. The cofactor is Mg(2+). Requires Mn(2+) as cofactor. As to expression, highly expressed in testis. Low level of expression in kidney. Also expressed in a number of tissues undergoing proliferation including embryo, uterus at pregnancy, placenta, and ovaries.

The protein localises to the nucleus. It localises to the membrane. It carries out the reaction O-phospho-L-seryl-[protein] + H2O = L-seryl-[protein] + phosphate. The enzyme catalyses O-phospho-L-threonyl-[protein] + H2O = L-threonyl-[protein] + phosphate. Its function is as follows. May be involved in regulation of cell cycle. In Mus musculus (Mouse), this protein is Protein phosphatase 1G (Ppm1g).